Here is a 492-residue protein sequence, read N- to C-terminus: Cell death protein 6 (492 aa).

A compositionally biased stretch (low complexity) spans 19–29; sequence GNNINGEGSSS. The interval 19–38 is disordered; it reads GNNINGEGSSSPSTSAPQVK. The PID domain maps to 55-215; the sequence is INGHVEYVAR…YILKKKIVEL (161 aa). Disordered stretches follow at residues 241-385 and 464-492; these read TGPP…STAA and TGDL…NLKQ. The segment covering 244–268 has biased composition (pro residues); the sequence is PIYPGLGPPALPLSPMPQGPPPNIP. The span at 300–312 shows a compositional bias: low complexity; sequence ASPSVSPASTSPS. The span at 313 to 333 shows a compositional bias: pro residues; that stretch reads GPAPSIPPPRPPALAPPPPVA. Residues 373–383 are compositionally biased toward basic and acidic residues; that stretch reads FDPRAGEKKST.

This sequence belongs to the ced-6 family. As to quaternary structure, homodimer. Interacts with ced-1. Interacts with E3 ubiquitin-protein ligase trim-21. As to expression, detected in gonadal sheath cells.

The protein resides in the cytoplasm. In terms of biological role, may function as an adapter protein in a pathway that mediates recognition and phagocytosis of apoptotic cells during normal development. Promotes engulfment of cells at both early and late stages of apoptosis. Required for actin reorganization around apoptotic cells. Plays a role in protecting dopaminergic neurons from oxidative stress-induced degeneration. Mediates recruitment of E3 ubiquitin-protein ligase trim-21 to the apoptotic cell surface which promotes ubiquitination and degradation of ced-1. This Caenorhabditis elegans protein is Cell death protein 6.